Consider the following 255-residue polypeptide: Taurine import ATP-binding protein TauB (255 aa).

The region spanning 2–229 (LQISHLYADY…RFVAGESSRS (228 aa)) is the ABC transporter domain. 34–41 (GPSGCGKT) is an ATP binding site.

It belongs to the ABC transporter superfamily. Taurine importer (TC 3.A.1.17.1) family. In terms of assembly, the complex is composed of two ATP-binding proteins (TauB), two transmembrane proteins (TauC) and a solute-binding protein (TauA).

The protein resides in the cell inner membrane. It catalyses the reaction taurine(out) + ATP + H2O = taurine(in) + ADP + phosphate + H(+). Functionally, part of the ABC transporter complex TauABC involved in taurine import. Responsible for energy coupling to the transport system. This is Taurine import ATP-binding protein TauB from Shigella flexneri.